A 251-amino-acid chain; its full sequence is Imidazole glycerol phosphate synthase subunit HisF (251 aa).

Catalysis depends on residues D12 and D131.

It belongs to the HisA/HisF family. As to quaternary structure, heterodimer of HisH and HisF.

The protein localises to the cytoplasm. It catalyses the reaction 5-[(5-phospho-1-deoxy-D-ribulos-1-ylimino)methylamino]-1-(5-phospho-beta-D-ribosyl)imidazole-4-carboxamide + L-glutamine = D-erythro-1-(imidazol-4-yl)glycerol 3-phosphate + 5-amino-1-(5-phospho-beta-D-ribosyl)imidazole-4-carboxamide + L-glutamate + H(+). Its pathway is amino-acid biosynthesis; L-histidine biosynthesis; L-histidine from 5-phospho-alpha-D-ribose 1-diphosphate: step 5/9. IGPS catalyzes the conversion of PRFAR and glutamine to IGP, AICAR and glutamate. The HisF subunit catalyzes the cyclization activity that produces IGP and AICAR from PRFAR using the ammonia provided by the HisH subunit. The sequence is that of Imidazole glycerol phosphate synthase subunit HisF from Streptomyces griseus subsp. griseus (strain JCM 4626 / CBS 651.72 / NBRC 13350 / KCC S-0626 / ISP 5235).